Here is a 34-residue protein sequence, read N- to C-terminus: Potassium channel toxin alpha-KTx 6.2 (34 aa).

Cystine bridges form between Cys3–Cys24, Cys9–Cys29, Cys13–Cys19, and Cys31–Cys34. A Cysteine amide modification is found at Cys34.

It belongs to the short scorpion toxin superfamily. Potassium channel inhibitor family. Alpha-KTx 06 subfamily. In terms of tissue distribution, expressed by the venom gland.

It localises to the secreted. In terms of biological role, blocks voltage-gated potassium channels Kv1.2/KCNA2 (IC(50)=0.12-0.8 nM), KCa3.1/KCNN4 (IC(50)=1-2.2 nM), Shaker B (IC(50)=2.39-80 nM), Kv1.1/KCNA1 (IC(50)=37-45 or no activity, depending on the study), Kv1.3/KCNA3 (IC(50)=150-180 or no activity, depending on the study). This chain is Potassium channel toxin alpha-KTx 6.2, found in Scorpio palmatus (Israeli golden scorpion).